The sequence spans 381 residues: Ribosomal lysine N-methyltransferase set11 (381 aa).

Positions 23–224 (PSLEFSVIPD…KGEQIFLCYG (202 aa)) constitute an SET domain. Residue Tyr-223 participates in S-adenosyl-L-methionine binding.

It belongs to the class V-like SAM-binding methyltransferase superfamily. RKM2 family.

It localises to the cytoplasm. It is found in the nucleus. The protein localises to the nucleolus. Functionally, S-adenosyl-L-methionine-dependent protein-lysine N-methyltransferase that trimethylates 60S ribosomal protein L12 (rpl1201 and rpl1202) at 'Lys-4' and may dimethylate L12 also at 'Lys-40' and 'Lys-41'. Overexpression causes a severe growth defect. Has a role in meiosis. This is Ribosomal lysine N-methyltransferase set11 (set11) from Schizosaccharomyces pombe (strain 972 / ATCC 24843) (Fission yeast).